Here is a 345-residue protein sequence, read N- to C-terminus: Delta(6)-protoilludene synthase (345 aa).

Mg(2+)-binding residues include Asp-84, Asn-220, Ser-224, and Glu-228. A DDXXD motif motif is present at residues Asp-84–Asp-88. (2E,6E)-farnesyl diphosphate contacts are provided by Arg-309 and Tyr-310.

It belongs to the terpene synthase family. In terms of assembly, monomer. Requires Mg(2+) as cofactor.

The catalysed reaction is (2E,6E)-farnesyl diphosphate = Delta(6)-protoilludene + diphosphate. It functions in the pathway secondary metabolite biosynthesis. In terms of biological role, delta(6)-protoilludene synthase, part of the gene cluster that mediates the biosynthesis of melleolides, a range of antifungal and phytotoxic polyketide derivatives composed of an orsellinic acid (OA) moiety esterified to various sesquiterpene alcohols. The first step in melleolides biosynthesis is performed by the delta(6)-protoilludene synthase PRO1 which catalyzes the cyclization of farnesyl diphosphate to protoilludene. The orsellinic acid synthase armB produces OA by condensing acetyl-CoA with 3 malonyl-CoA units in a three-round chain elongation reaction folowed by a C2-C7 ring closure. ArmB further catalyzes the trans-esterification of OA to the various sesquiterpene alcohols resulting from the hydroxylation of protoilludene. The melleolides cluster also includes 5 cytochrome P450 monooxygenases, 4 NAD(+)-dependent oxidoreductases, one flavin-dependent oxidoreductase, and one O-methyltransferase. The cytochrome P450 monooxygenases may be involved in protoilludene hydroxylation to elaborate melleolides with multiple alcohol groups, such as melleolide D, which carries alcohol functionalities at C-4, C-5, C-10, and C-13. The role of the NAD(+)-dependent enzymes remains unknown. Numerous melleolides, including arnamial, show 5'-O-methylation of the aromatic moiety which may be catalyzed by the methyltransferase encoded in the cluster. The flavin-dependent oxidoreductase might represent the dehydrogenase yielding the aldehyde in position 1 of arnamial and other melleolides. Finally, several halogenases, localized outside of the cluster, are able to catalyze the transfer of a single chlorine atom to the melleolide backbone, resulting in a 6'-chloromelleolide product. The protein is Delta(6)-protoilludene synthase of Armillaria gallica (Bulbous honey fungus).